Reading from the N-terminus, the 76-residue chain is cAMP-dependent protein kinase inhibitor alpha (76 aa).

T2 carries the N-acetylthreonine modification. The interval K49–S76 is disordered.

It belongs to the PKI family.

Functionally, extremely potent competitive inhibitor of cAMP-dependent protein kinase activity, this protein interacts with the catalytic subunit of the enzyme after the cAMP-induced dissociation of its regulatory chains. The polypeptide is cAMP-dependent protein kinase inhibitor alpha (PKIA) (Bos taurus (Bovine)).